Here is a 542-residue protein sequence, read N- to C-terminus: Chaperonin GroEL (542 aa).

ATP is bound by residues 29–32 (TMGP), 86–90 (DGTTT), G413, 476–478 (NAA), and D492. The interval 521–542 (KPDPNANNQAPAAPQGGMGGMM) is disordered. Low complexity predominate over residues 524–535 (PNANNQAPAAPQ).

This sequence belongs to the chaperonin (HSP60) family. In terms of assembly, forms a cylinder of 14 subunits composed of two heptameric rings stacked back-to-back. Interacts with the co-chaperonin GroES.

Its subcellular location is the cytoplasm. The catalysed reaction is ATP + H2O + a folded polypeptide = ADP + phosphate + an unfolded polypeptide.. Together with its co-chaperonin GroES, plays an essential role in assisting protein folding. The GroEL-GroES system forms a nano-cage that allows encapsulation of the non-native substrate proteins and provides a physical environment optimized to promote and accelerate protein folding. This is Chaperonin GroEL from Limosilactobacillus reuteri subsp. reuteri (strain JCM 1112) (Lactobacillus reuteri).